Reading from the N-terminus, the 227-residue chain is D-lyxose/D-mannose isomerase (227 aa).

D-fructose contacts are provided by residues lysine 90, histidine 103 to glutamate 110, histidine 171, glutamate 186, and aspartate 193. Positions 103, 105, 110, and 171 each coordinate Mn(2+).

Belongs to the D-lyxose ketol-isomerase family. In terms of assembly, homodimer; disulfide-linked. Dimerization is facilitated through a disulfide bond between the two monomers of the dimeric enzyme. Mn(2+) serves as cofactor.

The catalysed reaction is D-lyxose = D-xylulose. It carries out the reaction D-mannose = D-fructose. Its function is as follows. Sugar isomerase that catalyzes the reversible isomerization of D-lyxose to D-xylulose, and D-mannose to D-fructose. Shows similar activity toward D-lyxose and D-mannose with a turnover and catalytic efficiency for D-lyxose as a substrate only 1.1- and 1.3-fold higher than those for D-mannose, respectively. Shows weaker activity with L-gulose, D-talose, L-ribose and L-allose. Overexpression enables cell growth on the rare pentose D-lyxose as the sole carbon source. This Escherichia coli O157:H7 protein is D-lyxose/D-mannose isomerase.